An 89-amino-acid chain; its full sequence is MLKQSIEIINKLGLHARASNKFTQTASQFKSEVWVTKNDSRVNGKSIMGLMMLAAAKGTVIELETDGADEAEAMRALTDLINGYFGEGE.

In terms of domain architecture, HPr spans 1 to 88 (MLKQSIEIIN…DLINGYFGEG (88 aa)). H15 functions as the Pros-phosphohistidine intermediate in the catalytic mechanism. At S46 the chain carries Phosphoserine; by HPrK/P.

It belongs to the HPr family.

The protein localises to the cytoplasm. With respect to regulation, phosphorylation on Ser-46 inhibits the phosphoryl transfer from enzyme I to HPr. Functionally, general (non sugar-specific) component of the phosphoenolpyruvate-dependent sugar phosphotransferase system (sugar PTS). This major carbohydrate active-transport system catalyzes the phosphorylation of incoming sugar substrates concomitantly with their translocation across the cell membrane. The phosphoryl group from phosphoenolpyruvate (PEP) is transferred to the phosphoryl carrier protein HPr by enzyme I. Phospho-HPr then transfers it to the PTS EIIA domain. This Neisseria meningitidis serogroup A / serotype 4A (strain DSM 15465 / Z2491) protein is Phosphocarrier protein HPr (ptsH).